Here is a 170-residue protein sequence, read N- to C-terminus: Alpha-crystallin A chain (170 aa).

M1 bears the N-acetylmethionine mark. The tract at residues 1–63 is required for complex formation with BFSP1 and BFSP2; sequence MDVTIQHPWF…RTVLDSGISE (63 aa). At Q6 the chain carries Deamidated glutamine; partial. A Phosphoserine modification is found at S45. Q50 is subject to Deamidated glutamine; partial. The sHSP domain maps to 52–161; the sequence is LFRTVLDSGI…SERTIPVSRE (110 aa). N6-acetyllysine is present on residues K70 and K99. Residue H100 coordinates Zn(2+). N101 bears the Deamidated asparagine; partial mark. Zn(2+) is bound by residues E102, H107, and H151. Residues 144–170 form a disordered region; sequence PKIVDPSHSERTIPVSREEKPSSAPSS. Residues 148-164 are compositionally biased toward basic and acidic residues; sequence DPSHSERTIPVSREEKP. An O-linked (GlcNAc) serine glycan is attached at S159.

It belongs to the small heat shock protein (HSP20) family. In terms of assembly, heteromer composed of three CRYAA and one CRYAB subunits. Inter-subunit bridging via zinc ions enhances stability, which is crucial as there is no protein turn over in the lens. Can also form homodimers and homotetramers (dimers of dimers) which serve as the building blocks of homooligomers. Within homooligomers, the zinc-binding motif is created from residues of 3 different molecules. His-100 and Glu-102 from one molecule are ligands of the zinc ion, and His-107 and His-151 residues from additional molecules complete the site with tetrahedral coordination geometry. Part of a complex required for lens intermediate filament formation composed of BFSP1, BFSP2 and CRYAA. Acetylation at Lys-70 may increase chaperone activity. Post-translationally, undergoes age-dependent proteolytical cleavage at the C-terminus.

It is found in the cytoplasm. The protein localises to the nucleus. Its function is as follows. Contributes to the transparency and refractive index of the lens. Acts as a chaperone, preventing aggregation of various proteins under a wide range of stress conditions. Required for the correct formation of lens intermediate filaments as part of a complex composed of BFSP1, BFSP2 and CRYAA. The protein is Alpha-crystallin A chain (CRYAA) of Choloepus hoffmanni (Hoffmann's two-fingered sloth).